The primary structure comprises 144 residues: Single-stranded DNA-binding protein 3 (144 aa).

The 103-residue stretch at 1 to 103 (MNKVVLIGRL…IVAEEVQFLE (103 aa)) folds into the SSB domain. Polar residues predominate over residues 112 to 134 (MANDQFNNGNENGSMQLPDNNDI). The interval 112–144 (MANDQFNNGNENGSMQLPDNNDITPIDDGDIPF) is disordered.

As to quaternary structure, homotetramer.

This chain is Single-stranded DNA-binding protein 3 (ssb3), found in Clostridium acetobutylicum (strain ATCC 824 / DSM 792 / JCM 1419 / IAM 19013 / LMG 5710 / NBRC 13948 / NRRL B-527 / VKM B-1787 / 2291 / W).